The primary structure comprises 160 residues: Lipoprotein signal peptidase (160 aa).

The next 2 membrane-spanning stretches (helical) occupy residues Y63–F83 and D89–I109. Catalysis depends on residues D119 and D137. A helical transmembrane segment spans residues A132 to I152.

It belongs to the peptidase A8 family.

The protein resides in the cell inner membrane. The catalysed reaction is Release of signal peptides from bacterial membrane prolipoproteins. Hydrolyzes -Xaa-Yaa-Zaa-|-(S,diacylglyceryl)Cys-, in which Xaa is hydrophobic (preferably Leu), and Yaa (Ala or Ser) and Zaa (Gly or Ala) have small, neutral side chains.. It participates in protein modification; lipoprotein biosynthesis (signal peptide cleavage). This protein specifically catalyzes the removal of signal peptides from prolipoproteins. The polypeptide is Lipoprotein signal peptidase (Geobacter sulfurreducens (strain ATCC 51573 / DSM 12127 / PCA)).